The primary structure comprises 31 residues: Dermaseptin-7.2TR (31 aa).

Glutamic acid 1-amide is present on E31.

Expressed by the skin glands.

It is found in the secreted. In terms of biological role, has antimicrobial activity. This chain is Dermaseptin-7.2TR, found in Phyllomedusa trinitatis (Trinidad leaf frog).